A 398-amino-acid polypeptide reads, in one-letter code: Digeranylgeranylglycerophospholipid reductase (398 aa).

FAD is bound by residues Ala-15, Glu-34, Cys-45, Ala-46, Gly-48, Arg-99, Ala-123, Asp-280, Gly-292, and Ile-293. Val-372 is an a 2,3-bis-O-(geranylgeranyl)-sn-glycerol 1-phospholipid binding site.

The protein belongs to the geranylgeranyl reductase family. DGGGPL reductase subfamily. The cofactor is FAD.

The enzyme catalyses a 2,3-bis-O-phytanyl-sn-glycerol 1-phospholipid + 8 oxidized 2[4Fe-4S]-[ferredoxin] = a 2,3-bis-O-(geranylgeranyl)-sn-glycerol 1-phospholipid + 8 reduced 2[4Fe-4S]-[ferredoxin] + 16 H(+). It carries out the reaction 2,3-bis-O-(phytanyl)-sn-glycerol 1-phosphate + 8 oxidized 2[4Fe-4S]-[ferredoxin] = 2,3-bis-O-(geranylgeranyl)-sn-glycerol 1-phosphate + 8 reduced 2[4Fe-4S]-[ferredoxin] + 16 H(+). It catalyses the reaction a 2,3-bis-O-phytanyl-sn-glycerol 1-phospholipid + 8 A = a 2,3-bis-O-(geranylgeranyl)-sn-glycerol 1-phospholipid + 8 AH2. The catalysed reaction is CDP-2,3-bis-O-(geranylgeranyl)-sn-glycerol + 8 AH2 = CDP-2,3-bis-O-(phytanyl)-sn-glycerol + 8 A. The enzyme catalyses archaetidylserine + 8 AH2 = 2,3-bis-O-phytanyl-sn-glycero-3-phospho-L-serine + 8 A. It participates in membrane lipid metabolism; glycerophospholipid metabolism. In terms of biological role, is involved in the reduction of 2,3-digeranylgeranylglycerophospholipids (unsaturated archaeols) into 2,3-diphytanylglycerophospholipids (saturated archaeols) in the biosynthesis of archaeal membrane lipids. Catalyzes the formation of archaetidic acid (2,3-di-O-phytanyl-sn-glyceryl phosphate) from 2,3-di-O-geranylgeranylglyceryl phosphate (DGGGP) via the hydrogenation of each double bond of the isoprenoid chains. Is also probably able to reduce double bonds of geranyl groups in CDP-2,3-bis-O-(geranylgeranyl)-sn-glycerol and archaetidylserine, thus acting at various stages in the biosynthesis of archaeal membrane lipids. The polypeptide is Digeranylgeranylglycerophospholipid reductase (Methanoculleus marisnigri (strain ATCC 35101 / DSM 1498 / JR1)).